A 303-amino-acid chain; its full sequence is HTH-type transcriptional regulator CatM (303 aa).

Residues 1–58 (MELRHLRYFVTVVEEQSISKAAEKLCIAQPPLSRQIQKLEEELGIQLFERGFRPAKVT) form the HTH lysR-type domain. The segment at residues 18–37 (ISKAAEKLCIAQPPLSRQIQ) is a DNA-binding region (H-T-H motif). Cis,cis-muconate-binding residues include S99 and T128.

The protein belongs to the LysR transcriptional regulatory family. Homotetramer in solution.

Its function is as follows. Positively regulates the expression of catA, catBCIJFD and benPK in response to cis,cis-muconate. It binds to the catB-catM intercistronic region, to a specific sequence upstream of catA and to the benPK promoter region. Can also repress pca genes. In Acinetobacter baylyi (strain ATCC 33305 / BD413 / ADP1), this protein is HTH-type transcriptional regulator CatM (catM).